A 692-amino-acid polypeptide reads, in one-letter code: Elongation factor G (692 aa).

The tr-type G domain maps to 8–282; the sequence is ENTRNIGIMA…AVIDYLPSPL (275 aa). GTP-binding positions include 17 to 24, 81 to 85, and 135 to 138; these read AHIDAGKT, DTPGH, and NKMD.

This sequence belongs to the TRAFAC class translation factor GTPase superfamily. Classic translation factor GTPase family. EF-G/EF-2 subfamily.

Its subcellular location is the cytoplasm. Its function is as follows. Catalyzes the GTP-dependent ribosomal translocation step during translation elongation. During this step, the ribosome changes from the pre-translocational (PRE) to the post-translocational (POST) state as the newly formed A-site-bound peptidyl-tRNA and P-site-bound deacylated tRNA move to the P and E sites, respectively. Catalyzes the coordinated movement of the two tRNA molecules, the mRNA and conformational changes in the ribosome. The polypeptide is Elongation factor G (Bacillus mycoides (strain KBAB4) (Bacillus weihenstephanensis)).